A 225-amino-acid chain; its full sequence is GTP:AMP phosphotransferase, mitochondrial (225 aa).

Residue 24-29 coordinates GTP; sequence GSGKGT. Residues 45–74 are NMP; the sequence is SSGDILRQEIKSESTLGREATTYIAQGKLL. AMP-binding positions include serine 46, arginine 51, 72-74, 103-106, and glutamine 110; these read KLL and GFPR. The tract at residues 144–181 is LID; sequence NRYVHVPSGRVYNLQYNPPKVPGLDDITGEPLTKRLDD. GTP contacts are provided by residues arginine 145 and 154 to 155; that span reads VY. 2 residues coordinate AMP: arginine 178 and arginine 189. GTP is bound at residue serine 218.

It belongs to the adenylate kinase family. AK3 subfamily. In terms of assembly, monomer.

It is found in the mitochondrion matrix. The enzyme catalyses a ribonucleoside 5'-triphosphate + AMP = a ribonucleoside 5'-diphosphate + ADP. Functionally, involved in maintaining the homeostasis of cellular nucleotides by catalyzing the interconversion of nucleoside phosphates. Has GTP:AMP phosphotransferase and ITP:AMP phosphotransferase activities. Does not accept ATP as phosphate donor. This chain is GTP:AMP phosphotransferase, mitochondrial, found in Saccharomyces cerevisiae (strain ATCC 204508 / S288c) (Baker's yeast).